The primary structure comprises 322 residues: MAFVSQFNQLPCKTLALNPPQPQLTSKPSVFPIASIGATARAAAGKSLISVRPAFKVRAVLNDDEWGEDKDEKYGDDSSVAVAEKEEEKPLEPSEIYKLKKALVDSFYGTDRGLRVSRDTRAEIVELITQLESKNPTPAPTEALTLLNGKWILAYTTFAGLFPLLSRNLPLVKVEEISQTIDSENLTVQNSVQFSGPLATTSITTNAKFEVRSPLRVHIKFEEGVIGTPQLTDSIVIPDNVDFLGQKIDFTPFNGIISSLQDTASNVAKTISSQPPIKFSISNTRVESWLLTTYLDEDLRISRGDGGSVFVLLKEGSSFLSL.

Residues 1-58 (MAFVSQFNQLPCKTLALNPPQPQLTSKPSVFPIASIGATARAAAGKSLISVRPAFKVR) constitute a chromoplast transit peptide. A disordered region spans residues 67-88 (GEDKDEKYGDDSSVAVAEKEEE).

The protein belongs to the PAP/fibrillin family. Expressed in corollas. Not detected in fruits, stems, leaves, and roots.

It localises to the plastid. Its subcellular location is the chromoplast. Its function is as follows. May be involved in carotenoid sequestration within chromoplasts. In Cucumis sativus (Cucumber), this protein is Chromoplast-specific carotenoid-associated protein, chromoplastic (CHRC).